A 121-amino-acid chain; its full sequence is Basic phospholipase A2 homolog AppP2 (121 aa).

Cystine bridges form between C26/C115, C28/C44, C43/C95, C49/C121, C50/C88, C57/C81, and C75/C86. The segment at 105–117 (KKYKAYFKLKCKK) is important for membrane-damaging activities in eukaryotes and bacteria; heparin-binding.

It belongs to the phospholipase A2 family. Group II subfamily. K49 sub-subfamily. In terms of assembly, monomer. Expressed by the venom gland.

Its subcellular location is the secreted. In terms of biological role, snake venom phospholipase A2 (PLA2) that lacks enzymatic activity. Displays edema-inducing activities. Is myotoxic. A model of myotoxic mechanism has been proposed: an apo Lys49-PLA2 is activated by the entrance of a hydrophobic molecule (e.g. fatty acid) at the hydrophobic channel of the protein leading to a reorientation of a monomer. This reorientation causes a transition between 'inactive' to 'active' states, causing alignment of C-terminal and membrane-docking sites (MDoS) side-by-side and putting the membrane-disruption sites (MDiS) in the same plane, exposed to solvent and in a symmetric position for both monomers. The MDoS region stabilizes the toxin on membrane by the interaction of charged residues with phospholipid head groups. Subsequently, the MDiS region destabilizes the membrane with penetration of hydrophobic residues. This insertion causes a disorganization of the membrane, allowing an uncontrolled influx of ions (i.e. calcium and sodium), and eventually triggering irreversible intracellular alterations and cell death. This is Basic phospholipase A2 homolog AppP2 from Agkistrodon piscivorus piscivorus (Eastern cottonmouth).